The following is a 250-amino-acid chain: Phosphoribosylaminoimidazole-succinocarboxamide synthase (250 aa).

Belongs to the SAICAR synthetase family.

It catalyses the reaction 5-amino-1-(5-phospho-D-ribosyl)imidazole-4-carboxylate + L-aspartate + ATP = (2S)-2-[5-amino-1-(5-phospho-beta-D-ribosyl)imidazole-4-carboxamido]succinate + ADP + phosphate + 2 H(+). The protein operates within purine metabolism; IMP biosynthesis via de novo pathway; 5-amino-1-(5-phospho-D-ribosyl)imidazole-4-carboxamide from 5-amino-1-(5-phospho-D-ribosyl)imidazole-4-carboxylate: step 1/2. The chain is Phosphoribosylaminoimidazole-succinocarboxamide synthase from Bifidobacterium adolescentis (strain ATCC 15703 / DSM 20083 / NCTC 11814 / E194a).